The primary structure comprises 143 residues: 16 kDa calcium-binding protein (143 aa).

4 consecutive EF-hand domains span residues 2 to 37 (SEEK…VGVC), 41 to 71 (ADKI…LPPR), 73 to 108 (KCVA…SGMD), and 109 to 143 (IDQN…QTYK). The Ca(2+) site is built by aspartate 15, aspartate 17, asparagine 19, glutamate 26, aspartate 49, asparagine 51, aspartate 53, lysine 55, glutamate 60, aspartate 86, aspartate 88, serine 90, lysine 92, glutamate 97, aspartate 122, asparagine 124, aspartate 126, glutamate 128, and glutamate 133.

In terms of tissue distribution, found in eggs.

Its function is as follows. Calcium-binding protein. In Schistosoma mansoni (Blood fluke), this protein is 16 kDa calcium-binding protein.